Consider the following 342-residue polypeptide: Nucleoid-associated protein Sbal223_1817 (342 aa).

This sequence belongs to the YejK family.

The protein resides in the cytoplasm. Its subcellular location is the nucleoid. In Shewanella baltica (strain OS223), this protein is Nucleoid-associated protein Sbal223_1817.